Here is a 95-residue protein sequence, read N- to C-terminus: Cliotide T5 (95 aa).

The segment at residues 1-30 is a cross-link (cyclopeptide (Gly-Asn)); that stretch reads GIPCGESCVFIPCISTVIGCSCKNKVCYRN. 3 disulfide bridges follow: Cys4–Cys20, Cys8–Cys22, and Cys13–Cys27. The propeptide at 31–95 is removed in mature form; sequence HVIAAEAKTM…KDHLKMSITN (65 aa).

Post-translationally, contains 3 disulfide bonds. In terms of processing, this is a cyclic peptide. As to expression, expressed in stem, shoot, root, leaf, pod and nodule but not in flower and seed (at protein level).

Its function is as follows. Probably participates in a plant defense mechanism. This chain is Cliotide T5, found in Clitoria ternatea (Butterfly pea).